The primary structure comprises 123 residues: Ribonuclease P protein component (123 aa).

It belongs to the RnpA family. Consists of a catalytic RNA component (M1 or rnpB) and a protein subunit.

The catalysed reaction is Endonucleolytic cleavage of RNA, removing 5'-extranucleotides from tRNA precursor.. In terms of biological role, RNaseP catalyzes the removal of the 5'-leader sequence from pre-tRNA to produce the mature 5'-terminus. It can also cleave other RNA substrates such as 4.5S RNA. The protein component plays an auxiliary but essential role in vivo by binding to the 5'-leader sequence and broadening the substrate specificity of the ribozyme. This is Ribonuclease P protein component from Streptococcus pneumoniae (strain JJA).